The chain runs to 130 residues: Small ribosomal subunit protein uS11 (130 aa).

Belongs to the universal ribosomal protein uS11 family. As to quaternary structure, part of the 30S ribosomal subunit. Interacts with proteins S7 and S18. Binds to IF-3.

Its function is as follows. Located on the platform of the 30S subunit, it bridges several disparate RNA helices of the 16S rRNA. Forms part of the Shine-Dalgarno cleft in the 70S ribosome. The polypeptide is Small ribosomal subunit protein uS11 (Dehalococcoides mccartyi (strain ATCC BAA-2266 / KCTC 15142 / 195) (Dehalococcoides ethenogenes (strain 195))).